The primary structure comprises 87 residues: Small ribosomal subunit protein bS20 (87 aa).

The interval 1-27 is disordered; sequence MANIKSAKKRAVTSEKRRKHNASRRSM.

Belongs to the bacterial ribosomal protein bS20 family.

Its function is as follows. Binds directly to 16S ribosomal RNA. The sequence is that of Small ribosomal subunit protein bS20 from Erwinia tasmaniensis (strain DSM 17950 / CFBP 7177 / CIP 109463 / NCPPB 4357 / Et1/99).